Consider the following 383-residue polypeptide: 6-hydroxynicotinate 3-monooxygenase (383 aa).

The N-terminal stretch at Met1 to Ala26 is a signal peptide. FAD-binding positions include Gly15, Glu34–Gln35, His47, Arg108, and Leu130. Residue His47 is the Proton acceptor of the active site. Residue Tyr214 is the Proton acceptor of the active site. Residues Asp293 and Ala306–Ala307 each bind FAD.

It belongs to the 6-hydroxynicotinate 3-monooxygenase family. Monomer. FAD is required as a cofactor.

The enzyme catalyses 6-hydroxynicotinate + NADH + O2 + 2 H(+) = 2,5-dihydroxypyridine + CO2 + NAD(+) + H2O. The protein operates within cofactor degradation; nicotinate degradation. Competitively inhibited by 6-hydroxynicotinaldehyde. Flavin-dependent monooxygenase (FMO) that catalyzes the decarboxylative hydroxylation of 6-hydroxynicotinic acid (6-HNA) to 2,5-dihydroxypyridine (2,5-DHP) with concomitant oxidation of NADH, a step in the aerobic nicotinate degradation pathway. Is also active on the non-natural substrate 5-chloro-6-hydroxynicotinate, and is much less efficient on the substrate analog 4-hydroxybenzoate. This chain is 6-hydroxynicotinate 3-monooxygenase, found in Bordetella bronchiseptica (strain ATCC BAA-588 / NCTC 13252 / RB50) (Alcaligenes bronchisepticus).